The sequence spans 581 residues: Serine/threonine protein phosphatase 2A 55 kDa regulatory subunit B alpha isoform (581 aa).

Residues 1–27 form a disordered region; that stretch reads MMNPDGGDGDRLEAAGAGSSSAQQGHP. Over residues 14–25 the composition is skewed to low complexity; sequence AAGAGSSSAQQG. WD repeat units follow at residues 47-86 and 123-164; these read QEVD…DNAS and EIEE…VKQV. The span at 172-189 shows a compositional bias: low complexity; the sequence is RSVGTGTSSSASTSSSRG. The interval 172 to 192 is disordered; it reads RSVGTGTSSSASTSSSRGLLP. WD repeat units lie at residues 241 to 279, 290 to 330, 349 to 387, and 492 to 530; these read AHDY…QSFN, DLTE…LCDN, EIIA…GPVS, and DFST…RKFI.

This sequence belongs to the phosphatase 2A regulatory subunit B family. In terms of assembly, PP2A consists of a common heteromeric enzyme, composed of a catalytic subunit (subunits C), a constant regulatory subunit (subunit A), and a variety of regulatory subunits such as subunits B (the R2/B/PR55/B55, R3/B''/PR72/PR130/PR59 and R5/B'/B56 families).

In terms of biological role, the B regulatory subunit may modulate substrate selectivity and catalytic activity, and may also direct the localization of the catalytic enzyme to a particular subcellular compartment. In Oryza sativa subsp. japonica (Rice), this protein is Serine/threonine protein phosphatase 2A 55 kDa regulatory subunit B alpha isoform.